A 361-amino-acid chain; its full sequence is Septin-2 (361 aa).

Tyr-17 carries the post-translational modification Phosphotyrosine. The 273-residue stretch at Lys-34 to Arg-306 folds into the Septin-type G domain. The interval Gly-44–Ser-51 is G1 motif. GTP contacts are provided by residues Gly-44–Thr-52, Thr-78, Gly-104, and Lys-183–Thr-186. Residues Asp-101–Gly-104 are G3 motif. Positions Ala-182–Asp-185 are G4 motif. The residue at position 190 (Lys-190) is an N6-acetyllysine. The residue at position 211 (Tyr-211) is a Phosphotyrosine. Phosphoserine is present on Ser-218. GTP is bound by residues Gly-241, Arg-256, and Tyr-258. The tract at residues Trp-260–His-270 is important for dimerization.

It belongs to the TRAFAC class TrmE-Era-EngA-EngB-Septin-like GTPase superfamily. Septin GTPase family. Septins polymerize into heterooligomeric protein complexes that form filaments, and associate with cellular membranes, actin filaments and microtubules. GTPase activity is required for filament formation. Septin filaments are assembled from asymmetrical heterotrimers, composed of SEPTIN2, SEPTIN6 and SEPTIN7 that associate head-to-head to form a hexameric unit. Interaction between SEPTIN2 and SEPTIN7 seems indirect. Also interacts with SEPTIN9 and SEPTIN5. Interaction with SEPTIN4 not detected. Component of a septin core octameric complex consisting of SEPTIN12, SEPTIN7, SEPTIN6 and SEPTIN2 or SEPTIN4 in the order 12-7-6-2-2-6-7-12 or 12-7-6-4-4-6-7-12 and located in the sperm annulus. Interacts with MAP4. Interacts with DZIP1L. In terms of tissue distribution, widely expressed.

Its subcellular location is the cytoplasm. It is found in the cytoskeleton. The protein localises to the spindle. The protein resides in the chromosome. It localises to the centromere. Its subcellular location is the kinetochore. It is found in the cleavage furrow. The protein localises to the midbody. The protein resides in the cell cortex. It localises to the cell projection. Its subcellular location is the cilium membrane. It is found in the cilium. The protein localises to the flagellum. In terms of biological role, filament-forming cytoskeletal GTPase. Forms a filamentous structure with SEPTIN12, SEPTIN6, SEPTIN2 and probably SEPTIN4 at the sperm annulus which is required for the structural integrity and motility of the sperm tail during postmeiotic differentiation. Required for normal organization of the actin cytoskeleton. Plays a role in the biogenesis of polarized columnar-shaped epithelium by maintaining polyglutamylated microtubules, thus facilitating efficient vesicle transport, and by impeding MAP4 binding to tubulin. Required for the progression through mitosis. Forms a scaffold at the midplane of the mitotic splindle required to maintain CENPE localization at kinetochores and consequently chromosome congression. During anaphase, may be required for chromosome segregation and spindle elongation. Plays a role in ciliogenesis and collective cell movements. In cilia, required for the integrity of the diffusion barrier at the base of the primary cilium that prevents diffusion of transmembrane proteins between the cilia and plasma membranes: probably acts by regulating the assembly of the tectonic-like complex (also named B9 complex) by localizing TMEM231 protein. In Mus musculus (Mouse), this protein is Septin-2.